A 1198-amino-acid chain; its full sequence is Structural polyprotein (1198 aa).

The segment at 2–15 is interaction with host EXOC1; the sequence is TKKPGGPGKNRAIN. Residues 2-109 are Cytoplasmic-facing; the sequence is TKKPGGPGKN…RKQNKRGGNE (108 aa). The segment at 37-72 is hydrophobic; homodimerization of capsid protein C; it reads LLDGRGPVRFVLALITFFKFTALAPTKALLGRWKAV. The propeptide at 106 to 127 is ER anchor for the capsid protein C, removed in mature form by serine protease NS3; the sequence is GGNEGSIMWLASLAVVIAYAGA. The chain crosses the membrane as a helical span at residues 110–130; it reads GSIMWLASLAVVIAYAGAMKL. The Extracellular portion of the chain corresponds to 131-253; the sequence is SNFQGKLLMT…ATRYLMKTEN (123 aa). N-linked (GlcNAc...) asparagine; by host glycosylation occurs at Asn142. The chain crosses the membrane as a helical span at residues 254 to 274; sequence WIIRNPGYAFLAATLGWMLGS. Topologically, residues 275 to 279 are cytoplasmic; the sequence is NNGQR. Residues 280–294 form a helical membrane-spanning segment; it reads VVFTILLLLVAPAYS. Residues 295–746 are Extracellular-facing; it reads FNCLGMGNRD…QVFGGAFRTL (452 aa). Disulfide bonds link Cys297-Cys324, Cys354-Cys410, Cys354-Cys415, Cys368-Cys399, Cys386-Cys410, and Cys386-Cys415. A fusion peptide region spans residues 392–405; it reads DRGWGNGCGLFGKG. Asn448 carries N-linked (GlcNAc...) asparagine; by host glycosylation. 2 disulfide bridges follow: Cys484–Cys581 and Cys598–Cys629. Residues 747–767 form a helical membrane-spanning segment; that stretch reads FGGMSWITQGLMGALLLWMGV. At 768–773 the chain is on the cytoplasmic side; the sequence is NARDRS. The helical transmembrane segment at 774-794 threads the bilayer; the sequence is IALAFLATGGVLVFLATNVHA. The Extracellular segment spans residues 795 to 1198; sequence DTGCAIDITR…CADAWGHHLH (404 aa). 6 disulfide bridges follow: Cys798–Cys809, Cys849–Cys937, Cys973–Cys1017, Cys1074–Cys1123, Cys1085–Cys1106, and Cys1107–Cys1110. N-linked (GlcNAc...) asparagine; by host glycans are attached at residues Asn924 and Asn1001. The segment at 1152-1177 is disordered; sequence VDPFSAGPSGDVSGHPGGPSQEVDGQ.

As to quaternary structure, homodimer. Interacts (via N-terminus) with host EXOC1 (via C-terminus); this interaction results in EXOC1 degradation through the proteasome degradation pathway. Interacts with host CAPRIN1; this interaction is involved in the suppression of the integrated stress response. Forms heterodimers with envelope protein E in the endoplasmic reticulum and Golgi. In terms of assembly, homodimer; in the endoplasmic reticulum and Golgi. Interacts with protein prM. Interacts with non-structural protein 1. In terms of processing, genome polyprotein: Specific enzymatic cleavages in vivo yield mature proteins. Cleavages in the lumen of endoplasmic reticulum are performed by host signal peptidase, whereas cleavages in the cytoplasmic side are performed by serine protease NS3. Signal cleavage at the 2K-4B site requires a prior NS3 protease-mediated cleavage at the 4A-2K site. Cleaved in post-Golgi vesicles by a host furin, releasing the mature small envelope protein M, and peptide pr. This cleavage is incomplete as up to 30% of viral particles still carry uncleaved prM. Post-translationally, N-glycosylated.

It is found in the secreted. The protein resides in the virion membrane. It localises to the host endoplasmic reticulum membrane. Functionally, plays a role in virus budding by binding to the cell membrane and gathering the viral RNA into a nucleocapsid that forms the core of a mature virus particle. During virus entry, may induce genome penetration into the host cytoplasm after hemifusion induced by the surface proteins. Can migrate to the cell nucleus where it modulates host functions. Overcomes the anti-viral effects of host EXOC1 by sequestering and degrading the latter through the proteasome degradation pathway. Inhibits the integrated stress response (ISR) in the infected cell by binding to host CAPRIN1. In terms of biological role, inhibits RNA silencing by interfering with host Dicer. Its function is as follows. Prevents premature fusion activity of envelope proteins in trans-Golgi by binding to envelope protein E at pH6.0. After virion release in extracellular space, gets dissociated from E dimers. Acts as a chaperone for envelope protein E during intracellular virion assembly by masking and inactivating envelope protein E fusion peptide. prM is the only viral peptide matured by host furin in the trans-Golgi network probably to avoid catastrophic activation of the viral fusion activity in acidic Golgi compartment prior to virion release. prM-E cleavage is inefficient, and many virions are only partially matured. These uncleaved prM would play a role in immune evasion. Functionally, may play a role in virus budding. Exerts cytotoxic effects by activating a mitochondrial apoptotic pathway through M ectodomain. May display a viroporin activity. In terms of biological role, binds to host cell surface receptor and mediates fusion between viral and cellular membranes. Envelope protein is synthesized in the endoplasmic reticulum in the form of heterodimer with protein prM. They play a role in virion budding in the ER, and the newly formed immature particle is covered with 60 spikes composed of heterodimer between precursor prM and envelope protein E. The virion is transported to the Golgi apparatus where the low pH causes dissociation of PrM-E heterodimers and formation of E homodimers. prM-E cleavage is inefficient, and many virions are only partially matured. These uncleaved prM would play a role in immune evasion. Its function is as follows. May play a role in neuroinvasiveness. In Japanese encephalitis virus (strain Jaoars982) (JEV), this protein is Structural polyprotein.